Here is a 351-residue protein sequence, read N- to C-terminus: Calcium release-activated calcium channel protein 1 (351 aa).

Positions 1 to 21 (MSVWTTANNSGLETPTKSPIT) are enriched in polar residues. Disordered regions lie at residues 1 to 39 (MSVW…TGNH) and 71 to 141 (HAHP…EDLH). Residues 1–163 (MSVWTTANNS…SRAKLKASSK (163 aa)) lie on the Cytoplasmic side of the membrane. Low complexity-rich tracts occupy residues 22-33 (SSVPRAARSSAV) and 80-93 (SNSP…SNNS). Positions 94–106 (AGFQRTSISNSLL) are enriched in polar residues. A helical transmembrane segment spans residues 164 to 181 (TSALLSGFAMVAMVEVQL). Topologically, residues 182–191 (DHDTNVPPGM) are extracellular. A helical transmembrane segment spans residues 192-212 (LIAFAICTTLLVAVHMLALMI). The Cytoplasmic portion of the chain corresponds to 213-248 (STCILPNIETVCNLHSISLVHESPHERLHWYIETAW). A helical transmembrane segment spans residues 249-269 (AFSTLLGLILFLLEIAILCWV). Residues 270-277 (KFYDLSPP) lie on the Extracellular side of the membrane. The chain crosses the membrane as a helical span at residues 278-298 (AAWSACVVLIPVMIIFMAFAI). The Cytoplasmic portion of the chain corresponds to 299-351 (HFYRSLVSHKYEVTVSGIRELEMLKEQMEQDHLEHHNNIRNNGMNYGASGDIV).

It belongs to the Orai family. Hexamer.

The protein resides in the cell membrane. It catalyses the reaction Ca(2+)(in) = Ca(2+)(out). Pore-forming subunit of inward rectifying Ca(2+) release-activated Ca(2+) (CRAC) channels. Assembles in hexameric CRAC channels that mediate Ca(2+) influx upon depletion of endoplasmic reticulum Ca(2+) store and channel activation by Ca(2+) sensor Stim, a process known as store-operated Ca(2+) entry (SOCE). Regulates transcription factor NFAT nuclear import. The polypeptide is Calcium release-activated calcium channel protein 1 (Drosophila melanogaster (Fruit fly)).